Reading from the N-terminus, the 77-residue chain is Small ribosomal subunit protein bS16c (77 aa).

It belongs to the bacterial ribosomal protein bS16 family.

It localises to the plastid. The protein localises to the cyanelle. This is Small ribosomal subunit protein bS16c from Cyanophora paradoxa.